A 124-amino-acid polypeptide reads, in one-letter code: Small ribosomal subunit protein uS12 (124 aa).

Aspartate 89 is modified (3-methylthioaspartic acid).

It belongs to the universal ribosomal protein uS12 family. As to quaternary structure, part of the 30S ribosomal subunit. Contacts proteins S8 and S17. May interact with IF1 in the 30S initiation complex.

Its function is as follows. With S4 and S5 plays an important role in translational accuracy. In terms of biological role, interacts with and stabilizes bases of the 16S rRNA that are involved in tRNA selection in the A site and with the mRNA backbone. Located at the interface of the 30S and 50S subunits, it traverses the body of the 30S subunit contacting proteins on the other side and probably holding the rRNA structure together. The combined cluster of proteins S8, S12 and S17 appears to hold together the shoulder and platform of the 30S subunit. This is Small ribosomal subunit protein uS12 from Pasteurella multocida (strain Pm70).